The chain runs to 499 residues: Protein singed wings 2 (499 aa).

Positions 1 to 29 (MPSGVFQKRPKAAETISLFCMILIRLSRA) are cleaved as a signal peptide. LRR repeat units lie at residues 154-175 (ELHT…TFKR) and 178-199 (PLKV…LLLP). In terms of domain architecture, LRRCT 1 spans 210-265 (NPWNCTRNFKWLLLQPEKGRLVVDRDELICTDRKYKERQMLMVMHYKLELKRQCQS). LRR repeat units follow at residues 307-328 (NTTT…RDNP), 332-353 (HVVD…EDTY), and 357-378 (NFRL…ALDN). The LRRCT 2 domain occupies 394–449 (NPWHCTCKFGSRMRELLTKYKDIVRDAWNVSCTYRLDDDQLLAKVLTLSRQEMCNL).

Functionally, has a role in the ecdysone induced cascade; probably indirect control of 'late' ecdysone genes. In Drosophila melanogaster (Fruit fly), this protein is Protein singed wings 2.